The following is a 183-amino-acid chain: MGYRRSYAITFVALVAALWSVTKAQPSSSCVSTLTTLSPCLSYITGNSTTPSQPCCSRLDSVIKSSPQCICSAVNSPIPNIGLNINRTQALQLPNACNIQTPPLTQCNAATGPTAQPPAPSPTEKTPDVTLTPTSLPGARSGVGGGSKTVPSVGTGSSSRNVDPLPLHFLMFAVLVVCTSSFL.

An N-terminal signal peptide occupies residues 1–24; the sequence is MGYRRSYAITFVALVAALWSVTKA. 4 cysteine pairs are disulfide-bonded: C30–C71, C40–C55, C56–C97, and C69–C107. N47 and N86 each carry an N-linked (GlcNAc...) asparagine glycan. A disordered region spans residues 108-158; sequence NAATGPTAQPPAPSPTEKTPDVTLTPTSLPGARSGVGGGSKTVPSVGTGSS. The segment covering 149–158 has biased composition (polar residues); the sequence is TVPSVGTGSS. Residue S158 is the site of GPI-anchor amidated serine attachment. A propeptide spans 159–183 (removed in mature form); sequence SRNVDPLPLHFLMFAVLVVCTSSFL.

It belongs to the plant LTP family. Expressed in seedlings, preferentially in the endodermis of hypocotyls and roots. Also observed in siliques.

It is found in the cell membrane. Its function is as follows. Probable lipid transfer protein. The chain is Non-specific lipid transfer protein GPI-anchored 15 from Arabidopsis thaliana (Mouse-ear cress).